The primary structure comprises 100 residues: Small ribosomal subunit protein uS14c (100 aa).

It belongs to the universal ribosomal protein uS14 family. In terms of assembly, part of the 30S ribosomal subunit.

The protein resides in the plastid. It localises to the chloroplast. Functionally, binds 16S rRNA, required for the assembly of 30S particles. This Euglena gracilis protein is Small ribosomal subunit protein uS14c.